We begin with the raw amino-acid sequence, 344 residues long: Dihydroorotase (344 aa).

Positions 13 and 15 each coordinate Zn(2+). Substrate contacts are provided by residues 15–17 (HFR) and Asn-41. Zn(2+) contacts are provided by Lys-98, His-135, and His-173. The residue at position 98 (Lys-98) is an N6-carboxylysine. Residue His-135 participates in substrate binding. Leu-218 is a binding site for substrate. A Zn(2+)-binding site is contributed by Asp-246. Residue Asp-246 is part of the active site. Substrate is bound by residues His-250 and Ala-262.

This sequence belongs to the metallo-dependent hydrolases superfamily. DHOase family. Class II DHOase subfamily. In terms of assembly, homodimer. Zn(2+) is required as a cofactor.

The enzyme catalyses (S)-dihydroorotate + H2O = N-carbamoyl-L-aspartate + H(+). The protein operates within pyrimidine metabolism; UMP biosynthesis via de novo pathway; (S)-dihydroorotate from bicarbonate: step 3/3. Catalyzes the reversible cyclization of carbamoyl aspartate to dihydroorotate. The protein is Dihydroorotase of Shewanella sediminis (strain HAW-EB3).